We begin with the raw amino-acid sequence, 290 residues long: Phosphatidylglycerol--prolipoprotein diacylglyceryl transferase (290 aa).

Helical transmembrane passes span 21–41 (VSLH…MWLA), 60–80 (LLYA…VLFY), 98–118 (GGMS…WFAH), 124–144 (FFQV…AGRL), 198–218 (SQLY…NLFI), 224–244 (IGSV…LVEF), and 258–278 (VISM…IMMA). Arg143 provides a ligand contact to a 1,2-diacyl-sn-glycero-3-phospho-(1'-sn-glycerol).

It belongs to the Lgt family.

It is found in the cell inner membrane. It carries out the reaction L-cysteinyl-[prolipoprotein] + a 1,2-diacyl-sn-glycero-3-phospho-(1'-sn-glycerol) = an S-1,2-diacyl-sn-glyceryl-L-cysteinyl-[prolipoprotein] + sn-glycerol 1-phosphate + H(+). It functions in the pathway protein modification; lipoprotein biosynthesis (diacylglyceryl transfer). Catalyzes the transfer of the diacylglyceryl group from phosphatidylglycerol to the sulfhydryl group of the N-terminal cysteine of a prolipoprotein, the first step in the formation of mature lipoproteins. This is Phosphatidylglycerol--prolipoprotein diacylglyceryl transferase from Sodalis glossinidius (strain morsitans).